Reading from the N-terminus, the 185-residue chain is 3-hydroxyanthranilate 3,4-dioxygenase (185 aa).

Residue Arg44 participates in O2 binding. The Fe cation site is built by His48, Glu54, and His95. Glu54 lines the substrate pocket. Residues Arg99 and Glu109 each coordinate substrate. The a divalent metal cation site is built by Cys124, Cys127, Cys161, and Cys164.

It belongs to the 3-HAO family. The cofactor is Fe(2+).

The protein resides in the cytoplasm. The enzyme catalyses 3-hydroxyanthranilate + O2 = (2Z,4Z)-2-amino-3-carboxymuconate 6-semialdehyde. It functions in the pathway cofactor biosynthesis; NAD(+) biosynthesis; quinolinate from L-kynurenine: step 3/3. Functionally, catalyzes the oxidative ring opening of 3-hydroxyanthranilate to 2-amino-3-carboxymuconate semialdehyde, which spontaneously cyclizes to quinolinate. The chain is 3-hydroxyanthranilate 3,4-dioxygenase from Podospora anserina (strain S / ATCC MYA-4624 / DSM 980 / FGSC 10383) (Pleurage anserina).